A 333-amino-acid polypeptide reads, in one-letter code: UPF0324 membrane protein WS2204 (333 aa).

Transmembrane regions (helical) follow at residues 4-26, 31-53, 59-81, 88-110, 125-147, 154-176, 218-240, 253-275, and 310-332; these read SIRP…FGLA, FLSL…APWY, IGII…LFGF, LLGV…FTLG, SMLI…ESLS, TAIA…PLVY, VIVK…FTIL, PWFA…PSWL, and ALAL…VKLL.

It belongs to the UPF0324 family.

The protein resides in the cell membrane. The polypeptide is UPF0324 membrane protein WS2204 (Wolinella succinogenes (strain ATCC 29543 / DSM 1740 / CCUG 13145 / JCM 31913 / LMG 7466 / NCTC 11488 / FDC 602W) (Vibrio succinogenes)).